Reading from the N-terminus, the 512-residue chain is Choline-sulfatase (512 aa).

Residues Asp-14, Gln-15, and Cys-54 each coordinate Ca(2+). Cys-54 (nucleophile) is an active-site residue. 3-oxoalanine (Cys) is present on Cys-54. His-104 is an active-site residue. Ca(2+)-binding residues include Asp-296 and His-297.

It belongs to the sulfatase family. The cofactor is Ca(2+). Post-translationally, the conversion to 3-oxoalanine (also known as C-formylglycine, FGly), of a serine or cysteine residue in prokaryotes and of a cysteine residue in eukaryotes, is critical for catalytic activity.

The catalysed reaction is choline sulfate + H2O = choline + sulfate + H(+). It functions in the pathway amine and polyamine biosynthesis; choline biosynthesis; choline from choline sulfate: step 1/1. Functionally, converts choline-O-sulfate into choline. This is Choline-sulfatase (betC) from Rhizobium meliloti (strain 1021) (Ensifer meliloti).